Here is a 259-residue protein sequence, read N- to C-terminus: ATP synthase subunit a (259 aa).

Positions 1–10 (MFNLLNTYIT) are cleaved as a propeptide — removed in mature form. 6 consecutive transmembrane segments (helical) span residues 36–56 (LTTF…LYTL), 92–112 (WGLY…ANLI), 125–145 (LVFI…LGLY), 150–170 (VFFS…LLVI), 191–211 (ILAG…FMLI), and 216–236 (LVFG…EFAI).

Belongs to the ATPase A chain family. In terms of assembly, F-type ATPases have 2 components, CF(1) - the catalytic core - and CF(0) - the membrane proton channel. In yeast, the dimeric form of ATP synthase consists of 17 polypeptides: alpha, beta, gamma, delta, epsilon, 4 (B), 5 (OSCP), 6 (A), 8, 9 (C), d, E (Tim11), f, g, h, i/j and k.

The protein localises to the mitochondrion inner membrane. Functionally, mitochondrial membrane ATP synthase (F(1)F(0) ATP synthase or Complex V) produces ATP from ADP in the presence of a proton gradient across the membrane which is generated by electron transport complexes of the respiratory chain. F-type ATPases consist of two structural domains, F(1) - containing the extramembraneous catalytic core and F(0) - containing the membrane proton channel, linked together by a central stalk and a peripheral stalk. During catalysis, ATP synthesis in the catalytic domain of F(1) is coupled via a rotary mechanism of the central stalk subunits to proton translocation. Key component of the proton channel; it may play a direct role in the translocation of protons across the membrane. The protein is ATP synthase subunit a (ATP6) of Saccharomyces cerevisiae (strain ATCC 204508 / S288c) (Baker's yeast).